We begin with the raw amino-acid sequence, 254 residues long: UPF0246 protein FTH_1656 (254 aa).

The protein belongs to the UPF0246 family.

This is UPF0246 protein FTH_1656 from Francisella tularensis subsp. holarctica (strain OSU18).